The following is a 348-amino-acid chain: Structural glycoprotein p40 (348 aa).

Belongs to the baculoviridae gp41 family. O-glycosylated; contains N-acetylglucosamine side chains.

This chain is Structural glycoprotein p40 (P40), found in Bombyx mori nuclear polyhedrosis virus (BmNPV).